A 135-amino-acid polypeptide reads, in one-letter code: Small ribosomal subunit protein bS16 (135 aa).

Residues 106-135 (TERRQKRLVVKSRRRQAKKEAEGKAAGAEA) are disordered. Over residues 109-122 (RQKRLVVKSRRRQA) the composition is skewed to basic residues.

Belongs to the bacterial ribosomal protein bS16 family.

The sequence is that of Small ribosomal subunit protein bS16 from Chlorobium phaeobacteroides (strain DSM 266 / SMG 266 / 2430).